A 158-amino-acid chain; its full sequence is Male-specific protein scotti (158 aa).

The tract at residues 24–43 is disordered; sequence NVPDGNGDGDGDGDGDGNDA. The segment covering 30–42 has biased composition (acidic residues); the sequence is GDGDGDGDGDGND.

The protein belongs to the male-specific scotti family.

In terms of biological role, post-meiotically transcribed gene that has a role in late spermiogenesis; required for actin cone progression during spermatid individualization. In Drosophila virilis (Fruit fly), this protein is Male-specific protein scotti.